The following is a 476-amino-acid chain: 4-(hydroxymethyl)benzenesulfonate dehydrogenase TsaD1 (476 aa).

NAD(+) contacts are provided by residues 154 to 155 (WN), 178 to 181 (KAAE), and 230 to 231 (GS). Glutamate 252 acts as the Proton acceptor in catalysis. An NAD(+)-binding site is contributed by leucine 253. Cysteine 286 acts as the Nucleophile in catalysis. Residue glutamate 380 participates in NAD(+) binding.

It belongs to the aldehyde dehydrogenase family. As to quaternary structure, homodimer.

It carries out the reaction 4-(hydroxymethyl)benzenesulfonate + NAD(+) = 4-formylbenzenesulfonate + NADH + H(+). Functionally, involved in the toluene-4-sulfonate degradation pathway. Does not discriminate between the sulfonate and the carboxyl substituents and can also be involved in the p-toluenecarboxylate degradation pathway. The chain is 4-(hydroxymethyl)benzenesulfonate dehydrogenase TsaD1 (tsaD1) from Comamonas testosteroni (Pseudomonas testosteroni).